Consider the following 255-residue polypeptide: MSSSLTIFFFFFASTFLYTSSNSFNITNILNEHDDFSNFNQLLSETQLASTINKRQTITVLVVSNGALSSLSGQPTSVIKKILSLHIVLDYYDQKKLKNLSKKTVLLTTLFQSSGLARGQQGFLNATVMKNGDVAFGSAVPGSSLDAQLQDTVAALPFNISVLHISSAIMIDVKGDNAPTASPLSPVSSPPRPAESPNDDGQDFDEPPSSAPGAAADEPSENAGSANGVSRNDSQPAFAFTLLMSFIWWFMARLR.

The signal sequence occupies residues 1-23 (MSSSLTIFFFFFASTFLYTSSNS). The region spanning 24–169 (FNITNILNEH…ISVLHISSAI (146 aa)) is the FAS1 domain. N-linked (GlcNAc...) asparagine glycosylation is found at Asn25, Asn99, Asn125, and Asn159. Residues 179–231 (PTASPLSPVSSPPRPAESPNDDGQDFDEPPSSAPGAAADEPSENAGSANGVSR) are disordered. The segment covering 197 to 206 (PNDDGQDFDE) has biased composition (acidic residues). Polar residues predominate over residues 222–231 (NAGSANGVSR). Ser225 carries the GPI-anchor amidated serine lipid modification. Residues 226 to 255 (ANGVSRNDSQPAFAFTLLMSFIWWFMARLR) constitute a propeptide, removed in mature form.

It belongs to the fasciclin-like AGP family.

Its subcellular location is the cell membrane. Its function is as follows. May be a cell surface adhesion protein. The protein is Fasciclin-like arabinogalactan protein 14 (FLA14) of Arabidopsis thaliana (Mouse-ear cress).